The primary structure comprises 206 residues: Urease accessory protein UreG (206 aa).

11–18 (GPVGSGKT) is a GTP binding site.

The protein belongs to the SIMIBI class G3E GTPase family. UreG subfamily. As to quaternary structure, homodimer. UreD, UreF and UreG form a complex that acts as a GTP-hydrolysis-dependent molecular chaperone, activating the urease apoprotein by helping to assemble the nickel containing metallocenter of UreC. The UreE protein probably delivers the nickel.

It is found in the cytoplasm. Facilitates the functional incorporation of the urease nickel metallocenter. This process requires GTP hydrolysis, probably effectuated by UreG. In Mycolicibacterium gilvum (strain PYR-GCK) (Mycobacterium gilvum (strain PYR-GCK)), this protein is Urease accessory protein UreG.